Consider the following 599-residue polypeptide: Purine-uracil permease NCS1 (599 aa).

The next 12 helical transmembrane spans lie at 140-160 (LWIG…LVDL), 164-184 (WWQG…PLVL), 218-238 (LVGC…IFLL), 257-277 (TSPL…CIVW), 293-313 (ILIS…GGFG), 327-347 (FWTL…TLAL), 363-383 (IIGQ…GVAV), 411-433 (TLLA…NVVA), 445-465 (FFTF…FQPW), 474-494 (FVYT…GIIL), 525-545 (YNVA…PGFL), and 560-580 (VVYD…YWII).

The protein belongs to the purine-cytosine permease (2.A.39) family. In terms of tissue distribution, expressed in roots, leaves, stems, flowers, siliques and seeds.

Its subcellular location is the plastid. The protein resides in the chloroplast envelope. It is found in the chloroplast membrane. In terms of biological role, nucleobase-proton symporter that facilitates the uptake of nucleobases in the cells. Can transport adenine, guanine and uracil. Contributes to uracil import into plastids for plastidic uracil salvage which is essential for plant growth and development. This chain is Purine-uracil permease NCS1, found in Arabidopsis thaliana (Mouse-ear cress).